We begin with the raw amino-acid sequence, 333 residues long: ATP synthase subunit a (333 aa).

Positions 1 to 32 are cleaved as a signal peptide; it reads MIYLHNKRKGMLKRLSALIVIGLLMNLPAVFA. 7 consecutive transmembrane segments (helical) span residues 100 to 120, 161 to 181, 185 to 205, 229 to 249, 254 to 274, 279 to 299, and 300 to 320; these read HVVM…GVGN, FMPF…IGLV, ATAT…FLVT, LMWI…PFAL, FANM…IFVF, IAPV…LVAF, and LQAY…VAHE.

Belongs to the ATPase A chain family. As to quaternary structure, F-type ATPases have 2 components, CF(1) - the catalytic core - and CF(0) - the membrane proton channel. CF(1) has five subunits: alpha(3), beta(3), gamma(1), delta(1), epsilon(1). CF(0) has four main subunits: a, b, b' and c.

The protein resides in the cell inner membrane. In terms of biological role, key component of the proton channel; it plays a direct role in the translocation of protons across the membrane. The polypeptide is ATP synthase subunit a (Chloroherpeton thalassium (strain ATCC 35110 / GB-78)).